The sequence spans 215 residues: Urease accessory protein UreG (215 aa).

24 to 31 (GPVGSGKT) provides a ligand contact to GTP.

This sequence belongs to the SIMIBI class G3E GTPase family. UreG subfamily. In terms of assembly, homodimer. UreD, UreF and UreG form a complex that acts as a GTP-hydrolysis-dependent molecular chaperone, activating the urease apoprotein by helping to assemble the nickel containing metallocenter of UreC. The UreE protein probably delivers the nickel.

It is found in the cytoplasm. Its function is as follows. Facilitates the functional incorporation of the urease nickel metallocenter. This process requires GTP hydrolysis, probably effectuated by UreG. The sequence is that of Urease accessory protein UreG from Burkholderia orbicola (strain MC0-3).